A 375-amino-acid polypeptide reads, in one-letter code: Succinyl-diaminopimelate desuccinylase (375 aa).

A Zn(2+)-binding site is contributed by His-66. The active site involves Asp-68. Asp-99 contacts Zn(2+). Glu-130 (proton acceptor) is an active-site residue. The Zn(2+) site is built by Glu-131, Glu-159, and His-345.

The protein belongs to the peptidase M20A family. DapE subfamily. Homodimer. The cofactor is Zn(2+). Co(2+) serves as cofactor.

It catalyses the reaction N-succinyl-(2S,6S)-2,6-diaminopimelate + H2O = (2S,6S)-2,6-diaminopimelate + succinate. The protein operates within amino-acid biosynthesis; L-lysine biosynthesis via DAP pathway; LL-2,6-diaminopimelate from (S)-tetrahydrodipicolinate (succinylase route): step 3/3. Its function is as follows. Catalyzes the hydrolysis of N-succinyl-L,L-diaminopimelic acid (SDAP), forming succinate and LL-2,6-diaminopimelate (DAP), an intermediate involved in the bacterial biosynthesis of lysine and meso-diaminopimelic acid, an essential component of bacterial cell walls. This Xanthobacter autotrophicus (strain ATCC BAA-1158 / Py2) protein is Succinyl-diaminopimelate desuccinylase.